Reading from the N-terminus, the 84-residue chain is Acyl carrier protein (84 aa).

Positions 4–79 (NEIFEKVQDI…EVVDFIKSKL (76 aa)) constitute a Carrier domain. Position 39 is an O-(pantetheine 4'-phosphoryl)serine (serine 39).

The protein belongs to the acyl carrier protein (ACP) family. In terms of processing, 4'-phosphopantetheine is transferred from CoA to a specific serine of apo-ACP by AcpS. This modification is essential for activity because fatty acids are bound in thioester linkage to the sulfhydryl of the prosthetic group.

The protein resides in the plastid. The protein localises to the chloroplast. It participates in lipid metabolism; fatty acid biosynthesis. In terms of biological role, carrier of the growing fatty acid chain in fatty acid biosynthesis. This Porphyra purpurea (Red seaweed) protein is Acyl carrier protein.